A 355-amino-acid polypeptide reads, in one-letter code: Alanine racemase (355 aa).

Lys-34 serves as the catalytic Proton acceptor; specific for D-alanine. Lys-34 carries the N6-(pyridoxal phosphate)lysine modification. Substrate is bound at residue Arg-133. Tyr-249 (proton acceptor; specific for L-alanine) is an active-site residue. Met-297 serves as a coordination point for substrate.

It belongs to the alanine racemase family. Requires pyridoxal 5'-phosphate as cofactor.

The enzyme catalyses L-alanine = D-alanine. Its pathway is amino-acid biosynthesis; D-alanine biosynthesis; D-alanine from L-alanine: step 1/1. In terms of biological role, catalyzes the interconversion of L-alanine and D-alanine. May also act on other amino acids. This is Alanine racemase (alr) from Rickettsia canadensis (strain McKiel).